Reading from the N-terminus, the 272-residue chain is Dermonecrotic toxin LvSicTox-alphaIC1biii (272 aa).

The active site involves His5. The Mg(2+) site is built by Glu25 and Asp27. Residue His41 is the Nucleophile of the active site. 2 disulfide bridges follow: Cys45-Cys51 and Cys47-Cys189. Asp84 serves as a coordination point for Mg(2+).

This sequence belongs to the arthropod phospholipase D family. Class II subfamily. Mg(2+) is required as a cofactor. In terms of tissue distribution, expressed by the venom gland.

Its subcellular location is the secreted. It catalyses the reaction an N-(acyl)-sphingosylphosphocholine = an N-(acyl)-sphingosyl-1,3-cyclic phosphate + choline. It carries out the reaction an N-(acyl)-sphingosylphosphoethanolamine = an N-(acyl)-sphingosyl-1,3-cyclic phosphate + ethanolamine. The catalysed reaction is a 1-acyl-sn-glycero-3-phosphocholine = a 1-acyl-sn-glycero-2,3-cyclic phosphate + choline. The enzyme catalyses a 1-acyl-sn-glycero-3-phosphoethanolamine = a 1-acyl-sn-glycero-2,3-cyclic phosphate + ethanolamine. Functionally, dermonecrotic toxins cleave the phosphodiester linkage between the phosphate and headgroup of certain phospholipids (sphingolipid and lysolipid substrates), forming an alcohol (often choline) and a cyclic phosphate. This toxin acts on sphingomyelin (SM). It may also act on ceramide phosphoethanolamine (CPE), lysophosphatidylcholine (LPC) and lysophosphatidylethanolamine (LPE), but not on lysophosphatidylserine (LPS), and lysophosphatidylglycerol (LPG). It acts by transphosphatidylation, releasing exclusively cyclic phosphate products as second products. Induces dermonecrosis, hemolysis, increased vascular permeability, edema, inflammatory response, and platelet aggregation. The chain is Dermonecrotic toxin LvSicTox-alphaIC1biii from Loxosceles variegata (Recluse spider).